The chain runs to 670 residues: C6 finger domain transcription factor iacK (670 aa).

A disordered region spans residues 1-84; sequence MNTSPDYAQP…GEPKQSGPTV (84 aa). A compositionally biased stretch (pro residues) spans 44–54; sequence GPPPPPPPPPT. A compositionally biased stretch (low complexity) spans 55-74; it reads ATATAATAAATTTTAAPSAT. Residues 88 to 114 constitute a DNA-binding region (zn(2)-C6 fungal-type); that stretch reads CLACRSKHLKCDGGNPCARCQASESIC. The segment at 122–157 is disordered; it reads GYKGPRRNGTQNPNKRHAAASDDGSPNSNGSNESCP. The segment covering 142–155 has biased composition (low complexity); the sequence is SDDGSPNSNGSNES.

It localises to the nucleus. In terms of biological role, transcription factor; part of the gene cluster that mediates the biosynthesis of iso-A82775C, a enylepoxycyclohexane and biosynthetic precursor of the chloropestolide anticancer natural products. This is C6 finger domain transcription factor iacK from Pestalotiopsis fici (strain W106-1 / CGMCC3.15140).